The primary structure comprises 500 residues: Probable malate:quinone oxidoreductase (500 aa).

Belongs to the MQO family. Requires FAD as cofactor.

The catalysed reaction is (S)-malate + a quinone = a quinol + oxaloacetate. It participates in carbohydrate metabolism; tricarboxylic acid cycle; oxaloacetate from (S)-malate (quinone route): step 1/1. This chain is Probable malate:quinone oxidoreductase, found in Prochlorococcus marinus (strain MIT 9211).